The chain runs to 179 residues: Dual-action ribosomal maturation protein DarP (179 aa).

This sequence belongs to the DarP family.

The protein localises to the cytoplasm. Its function is as follows. Member of a network of 50S ribosomal subunit biogenesis factors which assembles along the 30S-50S interface, preventing incorrect 23S rRNA structures from forming. Promotes peptidyl transferase center (PTC) maturation. This chain is Dual-action ribosomal maturation protein DarP, found in Erwinia tasmaniensis (strain DSM 17950 / CFBP 7177 / CIP 109463 / NCPPB 4357 / Et1/99).